The sequence spans 486 residues: Cytosol aminopeptidase (486 aa).

Residues lysine 249 and aspartate 254 each coordinate Zn(2+). Residue lysine 261 is part of the active site. The Zn(2+) site is built by aspartate 272, aspartate 331, and glutamate 333. Arginine 335 is a catalytic residue.

Belongs to the peptidase M17 family. Homohexamer. Zn(2+) serves as cofactor.

The protein resides in the cytoplasm. It carries out the reaction Release of an N-terminal amino acid, Xaa-|-Yaa-, in which Xaa is preferably Leu, but may be other amino acids including Pro although not Arg or Lys, and Yaa may be Pro. Amino acid amides and methyl esters are also readily hydrolyzed, but rates on arylamides are exceedingly low.. The enzyme catalyses Release of N-terminal proline from a peptide.. In terms of biological role, presumably involved in the processing and regular turnover of intracellular proteins. Catalyzes the removal of unsubstituted N-terminal amino acids from various peptides. The sequence is that of Cytosol aminopeptidase from Encephalitozoon cuniculi (strain GB-M1) (Microsporidian parasite).